We begin with the raw amino-acid sequence, 349 residues long: Aspartate carbamoyltransferase catalytic subunit (349 aa).

Residues Arg-59 and Thr-60 each coordinate carbamoyl phosphate. Lys-87 contacts L-aspartate. 3 residues coordinate carbamoyl phosphate: Arg-109, His-142, and Gln-145. The L-aspartate site is built by Arg-182 and Arg-253. Carbamoyl phosphate-binding residues include Gly-294 and Pro-295.

The protein belongs to the aspartate/ornithine carbamoyltransferase superfamily. ATCase family. As to quaternary structure, heterododecamer (2C3:3R2) of six catalytic PyrB chains organized as two trimers (C3), and six regulatory PyrI chains organized as three dimers (R2).

The catalysed reaction is carbamoyl phosphate + L-aspartate = N-carbamoyl-L-aspartate + phosphate + H(+). The protein operates within pyrimidine metabolism; UMP biosynthesis via de novo pathway; (S)-dihydroorotate from bicarbonate: step 2/3. Catalyzes the condensation of carbamoyl phosphate and aspartate to form carbamoyl aspartate and inorganic phosphate, the committed step in the de novo pyrimidine nucleotide biosynthesis pathway. The chain is Aspartate carbamoyltransferase catalytic subunit from Synechococcus sp. (strain CC9902).